The sequence spans 100 residues: MELTPREKDKLLIFTAALLAERRQARGLKLNYPEAVALISAAIMEGARDGKTVADLMYYGTTILSRGDVMDGVAEMIPDIQVEATFPDGTKLVTVHQPIV.

This sequence belongs to the urease gamma subunit family. In terms of assembly, heterotrimer of UreA (gamma), UreB (beta) and UreC (alpha) subunits. Three heterotrimers associate to form the active enzyme.

It localises to the cytoplasm. It carries out the reaction urea + 2 H2O + H(+) = hydrogencarbonate + 2 NH4(+). Its pathway is nitrogen metabolism; urea degradation; CO(2) and NH(3) from urea (urease route): step 1/1. The chain is Urease subunit gamma from Ralstonia nicotianae (strain ATCC BAA-1114 / GMI1000) (Ralstonia solanacearum).